The following is a 224-amino-acid chain: UPF0758 protein PST_0473 (224 aa).

One can recognise an MPN domain in the interval 102–224 (ALESPQAVRD…PLSMAEYGWM (123 aa)). His173, His175, and Asp186 together coordinate Zn(2+). Residues 173 to 186 (HNHPSGVAEPSQAD) carry the JAMM motif motif.

The protein belongs to the UPF0758 family.

The sequence is that of UPF0758 protein PST_0473 from Stutzerimonas stutzeri (strain A1501) (Pseudomonas stutzeri).